A 241-amino-acid chain; its full sequence is Ubiquinone biosynthesis O-methyltransferase (241 aa).

Residues R44, G63, D84, and M128 each contribute to the S-adenosyl-L-methionine site.

Belongs to the methyltransferase superfamily. UbiG/COQ3 family.

It carries out the reaction a 3-demethylubiquinol + S-adenosyl-L-methionine = a ubiquinol + S-adenosyl-L-homocysteine + H(+). It catalyses the reaction a 3-(all-trans-polyprenyl)benzene-1,2-diol + S-adenosyl-L-methionine = a 2-methoxy-6-(all-trans-polyprenyl)phenol + S-adenosyl-L-homocysteine + H(+). The protein operates within cofactor biosynthesis; ubiquinone biosynthesis. O-methyltransferase that catalyzes the 2 O-methylation steps in the ubiquinone biosynthetic pathway. This Hydrogenovibrio crunogenus (strain DSM 25203 / XCL-2) (Thiomicrospira crunogena) protein is Ubiquinone biosynthesis O-methyltransferase.